The primary structure comprises 362 residues: GTP cyclohydrolase FolE2 (362 aa).

Belongs to the GTP cyclohydrolase IV family.

It carries out the reaction GTP + H2O = 7,8-dihydroneopterin 3'-triphosphate + formate + H(+). It participates in cofactor biosynthesis; 7,8-dihydroneopterin triphosphate biosynthesis; 7,8-dihydroneopterin triphosphate from GTP: step 1/1. Its function is as follows. Converts GTP to 7,8-dihydroneopterin triphosphate. This Jannaschia sp. (strain CCS1) protein is GTP cyclohydrolase FolE2.